A 75-amino-acid polypeptide reads, in one-letter code: Translation initiation factor IF-1 1 (75 aa).

The S1-like domain maps to 1 to 74 (MARSDMIEVD…TRGRIVYRYR (74 aa)).

This sequence belongs to the IF-1 family. In terms of assembly, component of the 30S ribosomal translation pre-initiation complex which assembles on the 30S ribosome in the order IF-2 and IF-3, IF-1 and N-formylmethionyl-tRNA(fMet); mRNA recruitment can occur at any time during PIC assembly.

It localises to the cytoplasm. One of the essential components for the initiation of protein synthesis. Stabilizes the binding of IF-2 and IF-3 on the 30S subunit to which N-formylmethionyl-tRNA(fMet) subsequently binds. Helps modulate mRNA selection, yielding the 30S pre-initiation complex (PIC). Upon addition of the 50S ribosomal subunit IF-1, IF-2 and IF-3 are released leaving the mature 70S translation initiation complex. The polypeptide is Translation initiation factor IF-1 1 (Symbiobacterium thermophilum (strain DSM 24528 / JCM 14929 / IAM 14863 / T)).